A 755-amino-acid chain; its full sequence is ABC transporter G family member 2 (755 aa).

The 261-residue stretch at 98-358 (LSFTDLTYSV…FSEFKHPIPE (261 aa)) folds into the ABC transporter domain. 151–158 (GASGSGKS) is a binding site for ATP. The region spanning 449–659 (IEMIVIGKRA…PYEGVLQNEF (211 aa)) is the ABC transmembrane type-2 domain. 6 consecutive transmembrane segments (helical) span residues 468 to 488 (LLGM…TMFT), 503 to 523 (FFAF…PVFL), 552 to 572 (IPAL…AVGL), 579 to 599 (FFFF…FVTF), 609 to 629 (LGFT…GFFI), and 728 to 748 (LWIT…TLLI).

The protein belongs to the ABC transporter superfamily. ABCG family. Eye pigment precursor importer (TC 3.A.1.204) subfamily.

Its subcellular location is the membrane. This is ABC transporter G family member 2 (ABCG2) from Arabidopsis thaliana (Mouse-ear cress).